A 282-amino-acid chain; its full sequence is ATP synthase subunit a (282 aa).

The next 6 membrane-spanning stretches (helical) occupy residues 38-58 (VDSMFYSVLLGLLTVFLLWLA), 97-117 (FVAPLALTVFVWIFLMNAMDM), 145-165 (VVPTADLSATLGMSCGVLLLC), 187-207 (FGSHPLLYPINFAMQIIEFVA), 225-247 (LIFILIALLGSTATVFGFVGHIV), and 261-281 (TLQAFIFMMLTLVYIGQAHEG).

It belongs to the ATPase A chain family. F-type ATPases have 2 components, CF(1) - the catalytic core - and CF(0) - the membrane proton channel. CF(1) has five subunits: alpha(3), beta(3), gamma(1), delta(1), epsilon(1). CF(0) has three main subunits: a(1), b(2) and c(9-12). The alpha and beta chains form an alternating ring which encloses part of the gamma chain. CF(1) is attached to CF(0) by a central stalk formed by the gamma and epsilon chains, while a peripheral stalk is formed by the delta and b chains.

It localises to the cell inner membrane. Functionally, key component of the proton channel; it plays a direct role in the translocation of protons across the membrane. This chain is ATP synthase subunit a, found in Azoarcus sp. (strain BH72).